Here is a 194-residue protein sequence, read N- to C-terminus: MSETLVLHLKVPTERFREVLSSLKEKQNFTASPSSQPKPQERPFQMKKPRAPYGMGPRAMKRREKAEKEKLGVVNDELAESSKPSSGAATPTRSAPKSSAGLINSGLRALDRSGKPCRRWEKKPISIRSISTIVWKLPLWIGTPDSIPNTPELPVKTTLDSVNEIAAALSTHAESSPMDATSPVDSMPESATGI.

Disordered stretches follow at residues 24–107 (KEKQ…NSGL) and 170–194 (STHAESSPMDATSPVDSMPESATGI). Composition is skewed to polar residues over residues 28–38 (NFTASPSSQPK) and 82–97 (SKPSSGAATPTRSAPK). S86 carries the post-translational modification Phosphoserine. Phosphothreonine is present on T90.

As to quaternary structure, component of the INO80 chromatin remodeling complex.

The protein localises to the cytoplasm. The protein resides in the nucleus. Functionally, component of the INO80 complex which remodels chromatin by shifting nucleosomes and is involved in DNA repair. The polypeptide is INO80 complex subunit 4 (ies4) (Schizosaccharomyces pombe (strain 972 / ATCC 24843) (Fission yeast)).